The chain runs to 294 residues: UDP-N-acetylenolpyruvoylglucosamine reductase (294 aa).

The region spanning 26–189 is the FAD-binding PCMH-type domain; it reads VGGQADVLFK…IEAEFKGVSS (164 aa). The active site involves Arg-169. Cys-218 (proton donor) is an active-site residue. Residue Glu-288 is part of the active site.

It belongs to the MurB family. FAD serves as cofactor.

The protein localises to the cytoplasm. It carries out the reaction UDP-N-acetyl-alpha-D-muramate + NADP(+) = UDP-N-acetyl-3-O-(1-carboxyvinyl)-alpha-D-glucosamine + NADPH + H(+). It participates in cell wall biogenesis; peptidoglycan biosynthesis. In terms of biological role, cell wall formation. This Wolbachia pipientis subsp. Culex pipiens (strain wPip) protein is UDP-N-acetylenolpyruvoylglucosamine reductase.